Here is a 118-residue protein sequence, read N- to C-terminus: Large ribosomal subunit protein bL20 (118 aa).

It belongs to the bacterial ribosomal protein bL20 family.

Functionally, binds directly to 23S ribosomal RNA and is necessary for the in vitro assembly process of the 50S ribosomal subunit. It is not involved in the protein synthesizing functions of that subunit. The sequence is that of Large ribosomal subunit protein bL20 from Bacillus cytotoxicus (strain DSM 22905 / CIP 110041 / 391-98 / NVH 391-98).